The sequence spans 253 residues: Ipsdienol dehydrogenase (253 aa).

NAD(+)-binding positions include 12 to 40 and Asp-63; that span reads VTGG…FSRN. Ser-149 contributes to the substrate binding site. The Proton acceptor role is filled by Tyr-162. Lys-166 contributes to the NAD(+) binding site.

Belongs to the short-chain dehydrogenases/reductases (SDR) family. As to expression, specifically expressed in male midguts. Expressed at higher level in the anterior midgut of fed males.

It localises to the cytoplasm. It is found in the cytosol. It carries out the reaction (4R)-ipsdienol + NADP(+) = ipsdienone + NADPH + H(+). It catalyses the reaction (4R)-ipsdienol + NAD(+) = ipsdienone + NADH + H(+). Its function is as follows. Catalyzes the oxidation of racemic ipsdienol and (4R)-(-)-ipsdienol to form ipsdienone (2-methyl-6-methylene-2,7-octadien-4-one), an intermediate in the biosynthesis of pheromonal ipsdienol in male pine engraver beetles. In contrast, (4S)-(+)-ipsdienol is not a substrate. In Ips pini (Pine engraver beetle), this protein is Ipsdienol dehydrogenase.